Consider the following 3589-residue polypeptide: D-lysergyl-peptide-synthetase subunit 1 (3589 aa).

The interval 344 to 742 (NCHSRPDSLA…IGRKDLQVKV (399 aa)) is adenylation (A) domain 1. The region spanning 883–952 (VERRLQLLFA…KLRDLAAASS (70 aa)) is the Carrier 1 domain. Residue S915 is modified to O-(pantetheine 4'-phosphoryl)serine. Residues 995–1380 (EDIYPCTSLQ…SQFQHILTQI (386 aa)) form a condensation (C) domain 1 region. Positions 1424–1826 (QAKAQMQPEA…RRKDSQVKLR (403 aa)) are adenylation (A) domain 2. One can recognise a Carrier 2 domain in the interval 1974 to 2042 (LERELQKIWA…TIEKLAAAAV (69 aa)). O-(pantetheine 4'-phosphoryl)serine is present on S2006. The condensation (C) domain 2 stretch occupies residues 2087–2509 (VEDIYPCSPI…IEMLDEEHRS (423 aa)). Positions 2534 to 2929 (CLESPESPAI…GRKDDQVKIR (396 aa)) are adenylation (A) domain 3. In terms of domain architecture, Carrier 3 spans 3064–3132 (LETRLQELVG…RLSELAVVLN (69 aa)). S3096 carries the post-translational modification O-(pantetheine 4'-phosphoryl)serine. A cyclization (Cyc) domain region spans residues 3187 to 3585 (TNFIALHFSQ…TYPESLVSEL (399 aa)).

The protein belongs to the NRP synthetase family.

It functions in the pathway alkaloid biosynthesis; ergot alkaloid biosynthesis. Its function is as follows. D-lysergyl-peptide-synthetase subunit 1; part of the gene cluster that mediates the biosynthesis of fungal ergot alkaloid ergovaline, the predominant ergopeptine product in E.festucae var. lolii. DmaW catalyzes the first step of ergot alkaloid biosynthesis by condensing dimethylallyl diphosphate (DMAP) and tryptophan to form 4-dimethylallyl-L-tryptophan. The second step is catalyzed by the methyltransferase easF that methylates 4-dimethylallyl-L-tryptophan in the presence of S-adenosyl-L-methionine, resulting in the formation of 4-dimethylallyl-L-abrine. The catalase easC and the FAD-dependent oxidoreductase easE then transform 4-dimethylallyl-L-abrine to chanoclavine-I which is further oxidized by easD in the presence of NAD(+), resulting in the formation of chanoclavine-I aldehyde. Agroclavine dehydrogenase easG then mediates the conversion of chanoclavine-I aldehyde to agroclavine via a non-enzymatic adduct reaction: the substrate is an iminium intermediate that is formed spontaneously from chanoclavine-I aldehyde in the presence of glutathione. The presence of easA is not required to complete this reaction. Further conversion of agroclavine to paspalic acid is a two-step process involving oxidation of agroclavine to elymoclavine and of elymoclavine to paspalic acid, the second step being performed by the elymoclavine oxidase cloA. Paspalic acid is then further converted to D-lysergic acid. Ergovaline is assembled from D-lysergic acid and three different amino acids by the D-lysergyl-peptide-synthetase composed of a monomudular (lpsB) and a trimodular (lpsA) nonribosomal peptide synthetase subunit. In Epichloe festucae var. lolii (Neotyphodium lolii), this protein is D-lysergyl-peptide-synthetase subunit 1.